We begin with the raw amino-acid sequence, 391 residues long: Elongation factor Tu 1 (391 aa).

The tr-type G domain occupies 10-201; it reads KLHVNIGTIG…EVDRYIPTPE (192 aa). Positions 19–26 are G1; sequence GHVDHGKT. GTP is bound at residue 19–26; that stretch reads GHVDHGKT. Mg(2+) is bound at residue Thr26. Residues 55-59 are G2; it reads GITIS. Positions 76 to 79 are G3; sequence DCPG. GTP is bound by residues 76–80 and 131–134; these read DCPGH and NKVD. The segment at 131-134 is G4; it reads NKVD. The segment at 169–171 is G5; sequence SAL.

It belongs to the TRAFAC class translation factor GTPase superfamily. Classic translation factor GTPase family. EF-Tu/EF-1A subfamily. In terms of assembly, monomer.

Its subcellular location is the cytoplasm. The catalysed reaction is GTP + H2O = GDP + phosphate + H(+). In terms of biological role, GTP hydrolase that promotes the GTP-dependent binding of aminoacyl-tRNA to the A-site of ribosomes during protein biosynthesis. The polypeptide is Elongation factor Tu 1 (Bartonella bacilliformis (strain ATCC 35685 / KC583 / Herrer 020/F12,63)).